Consider the following 84-residue polypeptide: Cell division topological specificity factor (84 aa).

It belongs to the MinE family.

Functionally, prevents the cell division inhibition by proteins MinC and MinD at internal division sites while permitting inhibition at polar sites. This ensures cell division at the proper site by restricting the formation of a division septum at the midpoint of the long axis of the cell. This is Cell division topological specificity factor from Pseudomonas putida (strain W619).